The following is an 82-amino-acid chain: Small ribosomal subunit protein bS16 (82 aa).

It belongs to the bacterial ribosomal protein bS16 family.

The chain is Small ribosomal subunit protein bS16 from Pseudoalteromonas translucida (strain TAC 125).